A 240-amino-acid polypeptide reads, in one-letter code: Nudix hydrolase 3 (240 aa).

In terms of domain architecture, Nudix hydrolase spans 50 to 190; it reads NSAMSVLIPL…RMKYTLPSFD (141 aa). The Nudix box motif lies at 89–110; that stretch reads GRMDPGETTTETALRETFEEIG. 2 residues coordinate Mg(2+): Glu-104 and Glu-108.

The protein belongs to the Nudix hydrolase family. PCD1 subfamily. Requires Mn(2+) as cofactor. Mg(2+) serves as cofactor.

In terms of biological role, probably mediates the hydrolysis of some nucleoside diphosphate derivatives. This chain is Nudix hydrolase 3 (ndx-3), found in Caenorhabditis elegans.